The sequence spans 712 residues: Translation initiation factor eIF2B subunit epsilon (712 aa).

Positions 1-20 are disordered; the sequence is MAGKKGQKKSGLGNHGKNSD. A phosphoserine mark is found at S478, S481, S507, S525, S538, and S707. The region spanning 539–710 is the W2 domain; sequence EFEDEDFEKE…QNADEESSSE (172 aa).

The protein belongs to the eIF-2B gamma/epsilon subunits family. In terms of assembly, component of the translation initiation factor 2B (eIF2B) complex which is a heterodecamer of two sets of five different subunits: alpha, beta, gamma, delta and epsilon. Subunits alpha, beta and delta comprise a regulatory subcomplex and subunits epsilon and gamma comprise a catalytic subcomplex. Within the complex, the hexameric regulatory complex resides at the center, with the two heterodimeric catalytic subcomplexes bound on opposite sides.

The protein resides in the cytoplasm. The protein localises to the cytosol. In terms of biological role, acts as a catalytic component of the translation initiation factor 2B (eIF2B) complex, which catalyzes the exchange of GDP for GTP on eukaryotic initiation factor 2 (eIF2) and is regulated by phosphorylated eIF2. Its guanine nucleotide exchange factor activity is repressed when bound to eIF2 complex phosphorylated on the alpha subunit, thereby limiting the amount of methionyl-initiator methionine tRNA available to the ribosome and consequently global translation is repressed. It activates the synthesis of GCN4 in yeast under amino acid starvation conditions by suppressing the inhibitory effects of multiple AUG codons present in the leader of GCN4 mRNA. It may promote either repression or activation of GCN4 expression depending on amino acid availability. GCD6 and GCD7 repress GCN4 expression at the translational level by ensuring that ribosomes which have translated UORF1 will reinitiate at UORF2, -3, or -4 and thus fail to reach the GCN4 start site. In Saccharomyces cerevisiae (strain ATCC 204508 / S288c) (Baker's yeast), this protein is Translation initiation factor eIF2B subunit epsilon (GCD6).